Consider the following 27-residue polypeptide: Secretin (27 aa).

Val-27 carries the valine amide modification.

The protein belongs to the glucagon family.

It localises to the secreted. Hormone involved in different processes, such as regulation of the pH of the duodenal content, food intake and water homeostasis. Exerts its biological effects by binding to secretin receptor (SCTR), a G-protein coupled receptor expressed in the basolateral domain of several cells. Acts as a key gastrointestinal hormone by regulating the pH of the duodenal content. Secreted by S cells of the duodenum in the crypts of Lieberkuehn and regulates the pH of the duodenum by (1) inhibiting the secretion of gastric acid from the parietal cells of the stomach and (2) stimulating the production of bicarbonate (NaHCO(3)) from the ductal cells of the pancreas. Production of bicarbonate is essential to neutralize the pH and ensure no damage is done to the small intestine by the gastric acid. In addition to regulating the pH of the duodenal content, plays a central role in diet induced thermogenesis: acts as a non-sympathetic brown fat (BAT) activator mediating prandial thermogenesis, which consequentially induces satiation. Mechanistically, secretin released by the gut after a meal binds to secretin receptor (SCTR) in brown adipocytes, activating brown fat thermogenesis by stimulating lipolysis, which is sensed in the brain and promotes satiation. Also able to stimulate lipolysis in white adipocytes. Also plays an important role in cellular osmoregulation: released into the systemic circulation in response to hyperosmolality and acts at different levels in the hypothalamus, pituitary and kidney to regulate water homeostasis. Also plays a role in the central nervous system, possibly by acting as a neuropeptide hormone: required for hippocampal synaptic function and neural progenitor cells maintenance. The chain is Secretin from Bos taurus (Bovine).